Reading from the N-terminus, the 872-residue chain is Alanine--tRNA ligase (872 aa).

Zn(2+)-binding residues include H567, H571, C669, and H673.

It belongs to the class-II aminoacyl-tRNA synthetase family. It depends on Zn(2+) as a cofactor.

The protein resides in the cytoplasm. It catalyses the reaction tRNA(Ala) + L-alanine + ATP = L-alanyl-tRNA(Ala) + AMP + diphosphate. Functionally, catalyzes the attachment of alanine to tRNA(Ala) in a two-step reaction: alanine is first activated by ATP to form Ala-AMP and then transferred to the acceptor end of tRNA(Ala). Also edits incorrectly charged Ser-tRNA(Ala) and Gly-tRNA(Ala) via its editing domain. The polypeptide is Alanine--tRNA ligase (Streptococcus thermophilus (strain ATCC BAA-491 / LMD-9)).